Here is a 405-residue protein sequence, read N- to C-terminus: L-cysteine:1D-myo-inositol 2-amino-2-deoxy-alpha-D-glucopyranoside ligase (405 aa).

Cys43 contributes to the Zn(2+) binding site. L-cysteinyl-5'-AMP is bound by residues 43-46 (CGIT), Thr58, and 81-83 (NIT). The 'HIGH' region motif lies at 45 to 55 (ITPYDATHLGH). A 'ERGGDP' region motif is present at residues 187–192 (ERGGDP). Trp227 contacts L-cysteinyl-5'-AMP. Zn(2+) is bound at residue Cys231. L-cysteinyl-5'-AMP is bound at residue 249 to 251 (GSD). His256 serves as a coordination point for Zn(2+). Ile283 lines the L-cysteinyl-5'-AMP pocket. Residues 289-293 (KMSKS) carry the 'KMSKS' region motif.

Belongs to the class-I aminoacyl-tRNA synthetase family. MshC subfamily. Monomer. The cofactor is Zn(2+).

The enzyme catalyses 1D-myo-inositol 2-amino-2-deoxy-alpha-D-glucopyranoside + L-cysteine + ATP = 1D-myo-inositol 2-(L-cysteinylamino)-2-deoxy-alpha-D-glucopyranoside + AMP + diphosphate + H(+). Its function is as follows. Catalyzes the ATP-dependent condensation of GlcN-Ins and L-cysteine to form L-Cys-GlcN-Ins. The protein is L-cysteine:1D-myo-inositol 2-amino-2-deoxy-alpha-D-glucopyranoside ligase of Nakamurella multipartita (strain ATCC 700099 / DSM 44233 / CIP 104796 / JCM 9543 / NBRC 105858 / Y-104) (Microsphaera multipartita).